We begin with the raw amino-acid sequence, 169 residues long: Peptide deformylase (169 aa).

Fe cation is bound by residues cysteine 92 and histidine 134. Glutamate 135 is a catalytic residue. Histidine 138 is a binding site for Fe cation.

It belongs to the polypeptide deformylase family. It depends on Fe(2+) as a cofactor.

It carries out the reaction N-terminal N-formyl-L-methionyl-[peptide] + H2O = N-terminal L-methionyl-[peptide] + formate. Removes the formyl group from the N-terminal Met of newly synthesized proteins. Requires at least a dipeptide for an efficient rate of reaction. N-terminal L-methionine is a prerequisite for activity but the enzyme has broad specificity at other positions. The chain is Peptide deformylase from Cellvibrio japonicus (strain Ueda107) (Pseudomonas fluorescens subsp. cellulosa).